The primary structure comprises 270 residues: Tetraspanin-17 (270 aa).

The Cytoplasmic portion of the chain corresponds to 1-19; the sequence is MPGKHQQFQDPEVGCCGKY. A helical membrane pass occupies residues 20-40; sequence FLFGFNIVFWVLGALFLAIGL. Topologically, residues 41 to 63 are extracellular; sequence WAWGEKGVLSNISGLTDLGGLDP. N-linked (GlcNAc...) asparagine glycosylation is present at Asn51. A helical transmembrane segment spans residues 64–84; it reads VWLFVVIGGIMSVLGFAGCIG. Topologically, residues 85 to 94 are cytoplasmic; it reads ALRENTFLLK. Residues 95-115 form a helical membrane-spanning segment; it reads FFSVFLGLIFFLELAAGILAF. Residues 116 to 234 are Extracellular-facing; that stretch reads VFKDWIRDQL…GQFEKWLQDN (119 aa). Intrachain disulfides connect Cys155–Cys223, Cys156–Cys188, Cys172–Cys182, and Cys189–Cys202. A glycan (N-linked (GlcNAc...) asparagine) is linked at Asn171. The helical transmembrane segment at 235–255 threads the bilayer; the sequence is LIVVAGVLVAIALLQICGICL. Residues 256-270 are Cytoplasmic-facing; that stretch reads AQNLVSDIEAVKANW.

The protein belongs to the tetraspanin (TM4SF) family. As to quaternary structure, interacts with ADAM10; the interaction influences ADAM10 substrate specificity, endocytosis and turnover.

It is found in the cell membrane. Its function is as follows. Part of TspanC8 subgroup, composed of 6 members that interact with the transmembrane metalloprotease ADAM10. This interaction is required for ADAM10 exit from the endoplasmic reticulum and for enzymatic maturation and trafficking to the cell surface as well as substrate specificity. Different TspanC8/ADAM10 complexes have distinct substrates. Seems to regulate VE-cadherin expression in endothelial cells probably through interaction with ADAM10, promoting leukocyte transmigration. The polypeptide is Tetraspanin-17 (Tspan17) (Rattus norvegicus (Rat)).